A 285-amino-acid chain; its full sequence is Shikimate dehydrogenase (NADP(+)) (285 aa).

Residues 20 to 22 (SIS) and S67 each bind shikimate. The Proton acceptor role is filled by K71. Residues N92 and D107 each coordinate shikimate. Residues 129–133 (GAGGA) and I227 contribute to the NADP(+) site. Residue Y229 coordinates shikimate. Residue G250 participates in NADP(+) binding.

It belongs to the shikimate dehydrogenase family. As to quaternary structure, homodimer.

The catalysed reaction is shikimate + NADP(+) = 3-dehydroshikimate + NADPH + H(+). It functions in the pathway metabolic intermediate biosynthesis; chorismate biosynthesis; chorismate from D-erythrose 4-phosphate and phosphoenolpyruvate: step 4/7. Involved in the biosynthesis of the chorismate, which leads to the biosynthesis of aromatic amino acids. Catalyzes the reversible NADPH linked reduction of 3-dehydroshikimate (DHSA) to yield shikimate (SA). This chain is Shikimate dehydrogenase (NADP(+)), found in Streptococcus thermophilus (strain ATCC BAA-491 / LMD-9).